Consider the following 246-residue polypeptide: Probable transcriptional regulatory protein YebC (246 aa).

Residues 1–20 (MAGHSKWANTRHRKAAQDAK) are disordered.

Belongs to the TACO1 family.

The protein resides in the cytoplasm. In Shigella flexneri, this protein is Probable transcriptional regulatory protein YebC.